Reading from the N-terminus, the 248-residue chain is UPF0246 protein A1I_02510 (248 aa).

This sequence belongs to the UPF0246 family.

In Rickettsia bellii (strain OSU 85-389), this protein is UPF0246 protein A1I_02510.